The sequence spans 420 residues: Transmembrane protease serine 11B-like protein (420 aa).

Residues 1-19 (MTVSKLRPVIASRKSFPPW) are Cytoplasmic-facing. Residues 20-40 (MIILGVLGVLAILGLIIGLLV) form a helical; Signal-anchor for type II membrane protein membrane-spanning segment. Residues 41 to 420 (HFLAVENKIY…RDWIASKTGI (380 aa)) lie on the Extracellular side of the membrane. One can recognise an SEA domain in the interval 48–165 (KIYYYQGSFK…GSLKLTEITK (118 aa)). Asn111 and Asn146 each carry an N-linked (GlcNAc...) asparagine glycan. The Peptidase S1 domain maps to 189 to 419 (ITGGSTAQKG…YRDWIASKTG (231 aa)). Cys214 and Cys230 form a disulfide bridge. His229 functions as the Charge relay system in the catalytic mechanism. An N-linked (GlcNAc...) asparagine glycan is attached at Asn239. Asp274 serves as the catalytic Charge relay system. Intrachain disulfides connect Cys339–Cys355 and Cys366–Cys395. The active-site Charge relay system is the Ser370.

Belongs to the peptidase S1 family.

It localises to the membrane. The protein localises to the cell membrane. Its activity is regulated as follows. Inhibited by aprotinin, leupeptin, benzamidine, SERPINA1, SPINT1 and SPINT2. In terms of biological role, serine protease. This chain is Transmembrane protease serine 11B-like protein (Tmprss11bnl), found in Rattus norvegicus (Rat).